We begin with the raw amino-acid sequence, 284 residues long: Acetyl-coenzyme A carboxylase carboxyl transferase subunit beta (284 aa).

Positions Met-25–Ala-284 constitute a CoA carboxyltransferase N-terminal domain. Residues Cys-29, Cys-32, Cys-48, and Cys-51 each coordinate Zn(2+). The C4-type zinc finger occupies Cys-29–Cys-51.

The protein belongs to the AccD/PCCB family. In terms of assembly, acetyl-CoA carboxylase is a heterohexamer composed of biotin carboxyl carrier protein (AccB), biotin carboxylase (AccC) and two subunits each of ACCase subunit alpha (AccA) and ACCase subunit beta (AccD). It depends on Zn(2+) as a cofactor.

It localises to the cytoplasm. It catalyses the reaction N(6)-carboxybiotinyl-L-lysyl-[protein] + acetyl-CoA = N(6)-biotinyl-L-lysyl-[protein] + malonyl-CoA. It participates in lipid metabolism; malonyl-CoA biosynthesis; malonyl-CoA from acetyl-CoA: step 1/1. In terms of biological role, component of the acetyl coenzyme A carboxylase (ACC) complex. Biotin carboxylase (BC) catalyzes the carboxylation of biotin on its carrier protein (BCCP) and then the CO(2) group is transferred by the transcarboxylase to acetyl-CoA to form malonyl-CoA. The chain is Acetyl-coenzyme A carboxylase carboxyl transferase subunit beta from Pelobacter propionicus (strain DSM 2379 / NBRC 103807 / OttBd1).